Consider the following 277-residue polypeptide: Undecaprenyl-diphosphatase 1 (277 aa).

The next 7 membrane-spanning stretches (helical) occupy residues 46 to 66 (VVGF…VYFF), 95 to 115 (WWVI…KSLI), 119 to 139 (LASL…MWAA), 165 to 185 (ILAL…TALI), 191 to 211 (VAAT…AGLY), 216 to 236 (ALGT…SFVV), and 256 to 276 (FVIY…TGVL).

It belongs to the UppP family.

The protein resides in the cell membrane. It catalyses the reaction di-trans,octa-cis-undecaprenyl diphosphate + H2O = di-trans,octa-cis-undecaprenyl phosphate + phosphate + H(+). Its function is as follows. Catalyzes the dephosphorylation of undecaprenyl diphosphate (UPP). Confers resistance to bacitracin. This is Undecaprenyl-diphosphatase 1 from Streptomyces avermitilis (strain ATCC 31267 / DSM 46492 / JCM 5070 / NBRC 14893 / NCIMB 12804 / NRRL 8165 / MA-4680).